Here is a 376-residue protein sequence, read N- to C-terminus: Queuine tRNA-ribosyltransferase (376 aa).

Catalysis depends on aspartate 93, which acts as the Proton acceptor. Substrate-binding positions include 93-97, aspartate 147, glutamine 190, and glycine 217; that span reads DSGGF. The interval 248–254 is RNA binding; the sequence is GVGKPGD. Catalysis depends on aspartate 267, which acts as the Nucleophile. Zn(2+) contacts are provided by cysteine 305, cysteine 307, cysteine 310, and histidine 336.

Belongs to the queuine tRNA-ribosyltransferase family. As to quaternary structure, homodimer. Within each dimer, one monomer is responsible for RNA recognition and catalysis, while the other monomer binds to the replacement base PreQ1. Requires Zn(2+) as cofactor.

It catalyses the reaction 7-aminomethyl-7-carbaguanine + guanosine(34) in tRNA = 7-aminomethyl-7-carbaguanosine(34) in tRNA + guanine. Its pathway is tRNA modification; tRNA-queuosine biosynthesis. In terms of biological role, catalyzes the base-exchange of a guanine (G) residue with the queuine precursor 7-aminomethyl-7-deazaguanine (PreQ1) at position 34 (anticodon wobble position) in tRNAs with GU(N) anticodons (tRNA-Asp, -Asn, -His and -Tyr). Catalysis occurs through a double-displacement mechanism. The nucleophile active site attacks the C1' of nucleotide 34 to detach the guanine base from the RNA, forming a covalent enzyme-RNA intermediate. The proton acceptor active site deprotonates the incoming PreQ1, allowing a nucleophilic attack on the C1' of the ribose to form the product. After dissociation, two additional enzymatic reactions on the tRNA convert PreQ1 to queuine (Q), resulting in the hypermodified nucleoside queuosine (7-(((4,5-cis-dihydroxy-2-cyclopenten-1-yl)amino)methyl)-7-deazaguanosine). This Dinoroseobacter shibae (strain DSM 16493 / NCIMB 14021 / DFL 12) protein is Queuine tRNA-ribosyltransferase.